The chain runs to 155 residues: Large ribosomal subunit protein uL22 (155 aa).

Belongs to the universal ribosomal protein uL22 family. In terms of assembly, part of the 50S ribosomal subunit. Contacts the macrolide antibiotic tylosin in the polypeptide exit tunnel.

This protein binds specifically to 23S rRNA. It makes multiple contacts with different domains of the 23S rRNA in the assembled 50S subunit and ribosome. Its function is as follows. Contacts all 6 domains of the 23S rRNA, helping stabilize their relative orientation. An extended beta-hairpin in the C-terminus forms part of the polypeptide exit tunnel, in which it helps forms a bend with protein L4, while most of the rest of the protein is located at the polypeptide exit tunnel on the outside of the subunit. This Haloarcula marismortui (strain ATCC 43049 / DSM 3752 / JCM 8966 / VKM B-1809) (Halobacterium marismortui) protein is Large ribosomal subunit protein uL22.